Consider the following 317-residue polypeptide: Methionyl-tRNA formyltransferase (317 aa).

Serine 112–proline 115 lines the (6S)-5,6,7,8-tetrahydrofolate pocket.

It belongs to the Fmt family.

The catalysed reaction is L-methionyl-tRNA(fMet) + (6R)-10-formyltetrahydrofolate = N-formyl-L-methionyl-tRNA(fMet) + (6S)-5,6,7,8-tetrahydrofolate + H(+). Attaches a formyl group to the free amino group of methionyl-tRNA(fMet). The formyl group appears to play a dual role in the initiator identity of N-formylmethionyl-tRNA by promoting its recognition by IF2 and preventing the misappropriation of this tRNA by the elongation apparatus. The chain is Methionyl-tRNA formyltransferase from Actinobacillus succinogenes (strain ATCC 55618 / DSM 22257 / CCUG 43843 / 130Z).